We begin with the raw amino-acid sequence, 74 residues long: DNA-directed RNA polymerase subunit omega (74 aa).

It belongs to the RNA polymerase subunit omega family. The RNAP catalytic core consists of 2 alpha, 1 beta, 1 beta' and 1 omega subunit. When a sigma factor is associated with the core the holoenzyme is formed, which can initiate transcription.

The catalysed reaction is RNA(n) + a ribonucleoside 5'-triphosphate = RNA(n+1) + diphosphate. Promotes RNA polymerase assembly. Latches the N- and C-terminal regions of the beta' subunit thereby facilitating its interaction with the beta and alpha subunits. The polypeptide is DNA-directed RNA polymerase subunit omega (Solidesulfovibrio magneticus (strain ATCC 700980 / DSM 13731 / RS-1) (Desulfovibrio magneticus)).